A 429-amino-acid polypeptide reads, in one-letter code: Serine--tRNA ligase (429 aa).

An L-serine-binding site is contributed by 235-237; sequence TAE. Residue 266–268 coordinates ATP; that stretch reads RSE. Residue Glu289 participates in L-serine binding. Residue 353–356 coordinates ATP; that stretch reads EISS. Ser389 provides a ligand contact to L-serine.

This sequence belongs to the class-II aminoacyl-tRNA synthetase family. Type-1 seryl-tRNA synthetase subfamily. In terms of assembly, homodimer. The tRNA molecule binds across the dimer.

Its subcellular location is the cytoplasm. It carries out the reaction tRNA(Ser) + L-serine + ATP = L-seryl-tRNA(Ser) + AMP + diphosphate + H(+). It catalyses the reaction tRNA(Sec) + L-serine + ATP = L-seryl-tRNA(Sec) + AMP + diphosphate + H(+). Its pathway is aminoacyl-tRNA biosynthesis; selenocysteinyl-tRNA(Sec) biosynthesis; L-seryl-tRNA(Sec) from L-serine and tRNA(Sec): step 1/1. Functionally, catalyzes the attachment of serine to tRNA(Ser). Is also able to aminoacylate tRNA(Sec) with serine, to form the misacylated tRNA L-seryl-tRNA(Sec), which will be further converted into selenocysteinyl-tRNA(Sec). In Histophilus somni (strain 2336) (Haemophilus somnus), this protein is Serine--tRNA ligase.